Consider the following 694-residue polypeptide: Ubiquitin-like modifier-activating enzyme ATG7 (694 aa).

The short motif at 370 to 375 is the GXGXXG motif element; it reads GAGTLG. Residue Cys550 is the Glycyl thioester intermediate of the active site. Positions 650–689 are homodimerization; sequence ALQEKEYVAELSGLAEVQRRAEEMAAHVDWEEDDDLVDDG.

It belongs to the ATG7 family. Homodimer. Interacts with ATG8 through a thioester bond between Cys-550 and the C-terminal 'Gly-116' of ATG8 and with ATG12 through a thioester bond between Cys-550 and the C-terminal 'Gly-160' of ATG12. Also interacts with ATG3.

The protein localises to the cytoplasm. The protein resides in the preautophagosomal structure. In terms of biological role, E1-like activating enzyme involved in the 2 ubiquitin-like systems required for cytoplasm to vacuole transport (Cvt) and autophagy. Activates ATG12 for its conjugation with ATG5 and ATG8 for its conjugation with phosphatidylethanolamine. Both systems are needed for the ATG8 association to Cvt vesicles and autophagosomes membranes. Autophagy is essential for maintenance of amino acid levels and protein synthesis under nitrogen starvation. Required for selective autophagic degradation of the nucleus (nucleophagy) as well as for mitophagy which contributes to regulate mitochondrial quantity and quality by eliminating the mitochondria to a basal level to fulfill cellular energy requirements and preventing excess ROS production. Autophagy is required for proper vegetative growth, asexual/sexual reproduction, and full virulence. Autophagy is particularly involved in the biosynthesis of deoxynivalenol (DON), an important virulence determinant. This Gibberella zeae (strain ATCC MYA-4620 / CBS 123657 / FGSC 9075 / NRRL 31084 / PH-1) (Wheat head blight fungus) protein is Ubiquitin-like modifier-activating enzyme ATG7.